The sequence spans 125 residues: Plastocyanin (125 aa).

The first 34 residues, 1-34 (MKVLASFARRLSLFAVAAVLCVGSFFLSAAPASA), serve as a signal peptide directing secretion. Residues 35–125 (QTVAIKMGAD…AGMVGKIVVQ (91 aa)) form the Plastocyanin-like domain. Residues H73, C110, H113, and M118 each contribute to the Cu cation site.

The protein belongs to the plastocyanin family. It depends on Cu(2+) as a cofactor.

The protein resides in the cellular thylakoid membrane. Functionally, participates in electron transfer between P700 and the cytochrome b6-f complex in photosystem I. This chain is Plastocyanin (petE), found in Synechococcus elongatus (strain ATCC 33912 / PCC 7942 / FACHB-805) (Anacystis nidulans R2).